We begin with the raw amino-acid sequence, 137 residues long: Methylglyoxal synthase (137 aa).

Positions 1–137 (MKIALIAHDR…NIVHGRDRDA (137 aa)) constitute an MGS-like domain. Residues His-8, Lys-12, 34–37 (TGTT), and 54–55 (SG) each bind substrate. Asp-60 acts as the Proton donor/acceptor in catalysis. His-87 contributes to the substrate binding site.

Belongs to the methylglyoxal synthase family.

The enzyme catalyses dihydroxyacetone phosphate = methylglyoxal + phosphate. Functionally, catalyzes the formation of methylglyoxal from dihydroxyacetone phosphate. This is Methylglyoxal synthase from Bacillus licheniformis (strain ATCC 14580 / DSM 13 / JCM 2505 / CCUG 7422 / NBRC 12200 / NCIMB 9375 / NCTC 10341 / NRRL NRS-1264 / Gibson 46).